We begin with the raw amino-acid sequence, 396 residues long: Ornithine aminotransferase (396 aa).

At Lys-255 the chain carries N6-(pyridoxal phosphate)lysine.

This sequence belongs to the class-III pyridoxal-phosphate-dependent aminotransferase family. OAT subfamily. Requires pyridoxal 5'-phosphate as cofactor.

The protein resides in the cytoplasm. It catalyses the reaction a 2-oxocarboxylate + L-ornithine = L-glutamate 5-semialdehyde + an L-alpha-amino acid. It participates in amino-acid biosynthesis; L-proline biosynthesis; L-glutamate 5-semialdehyde from L-ornithine: step 1/1. In terms of biological role, catalyzes the interconversion of ornithine to glutamate semialdehyde. The sequence is that of Ornithine aminotransferase from Staphylococcus carnosus (strain TM300).